Reading from the N-terminus, the 674-residue chain is Xaa-Pro aminopeptidase 2 (674 aa).

A signal peptide spans 1-21 (MARAHWGCCPWLVLLCACAWG). Asn35, Asn49, and Asn65 each carry an N-linked (GlcNAc...) asparagine glycan. Arg116 contributes to the substrate binding site. Asn278 and Asn291 each carry an N-linked (GlcNAc...) asparagine glycan. Substrate is bound at residue His430. Positions 450, 461, and 524 each coordinate Zn(2+). 3 residues coordinate substrate: His524, His533, and Glu555. Positions 555 and 569 each coordinate Zn(2+). The GPI-anchor amidated alanine moiety is linked to residue Ala649. Positions 650 to 674 (ARAPDTASWASVLVVSTLAILGWSV) are cleaved as a propeptide — removed in mature form.

It belongs to the peptidase M24B family. As to quaternary structure, homotrimer. Zn(2+) is required as a cofactor. N-glycosylated. Expressed in kidney, lung, heart, placenta, liver, small intestine and colon. No expression in brain, skeletal muscle, pancreas, spleen, thymus, prostate, testis and ovary.

It localises to the cell membrane. The enzyme catalyses Release of any N-terminal amino acid, including proline, that is linked to proline, even from a dipeptide or tripeptide.. Its activity is regulated as follows. Inhibited by apstatin and the chelating agent 1,10-phenanthroline. Also inhibited by high concentrations of Zn(2+). Not significantly inhibited by bestatin or phosphoramidon. Its function is as follows. Membrane-bound metalloprotease which catalyzes the removal of a penultimate prolyl residue from the N-termini of peptides, such as Arg-Pro-Pro. May play a role in the metabolism of the vasodilator bradykinin. This chain is Xaa-Pro aminopeptidase 2 (XPNPEP2), found in Homo sapiens (Human).